The chain runs to 166 residues: Lipoprotein signal peptidase (166 aa).

Helical transmembrane passes span 12–32 (WLWV…LILQ), 70–90 (WFFS…MYRS), and 102–122 (ALII…GFVV). Catalysis depends on residues aspartate 123 and aspartate 141. Residues 137-157 (FNLADSAICIGAALIVLEGFL) traverse the membrane as a helical segment.

This sequence belongs to the peptidase A8 family.

The protein localises to the cell inner membrane. It catalyses the reaction Release of signal peptides from bacterial membrane prolipoproteins. Hydrolyzes -Xaa-Yaa-Zaa-|-(S,diacylglyceryl)Cys-, in which Xaa is hydrophobic (preferably Leu), and Yaa (Ala or Ser) and Zaa (Gly or Ala) have small, neutral side chains.. It participates in protein modification; lipoprotein biosynthesis (signal peptide cleavage). In terms of biological role, this protein specifically catalyzes the removal of signal peptides from prolipoproteins. The polypeptide is Lipoprotein signal peptidase (Klebsiella pneumoniae (strain 342)).